The primary structure comprises 1940 residues: Cilia- and flagella-associated protein 74 (1940 aa).

The interval glycine 52–proline 90 is disordered. Over residues alanine 63–proline 90 the composition is skewed to low complexity. Positions alanine 100–proline 159 form a coiled coil. 5 disordered regions span residues valine 512–threonine 548, serine 1159–glutamate 1336, proline 1373–proline 1418, alanine 1714–lysine 1737, and proline 1894–valine 1940. Over residues serine 535 to threonine 548 the composition is skewed to low complexity. Over residues aspartate 1205–glycine 1220 the composition is skewed to gly residues. The segment covering aspartate 1227–aspartate 1236 has biased composition (acidic residues). Over residues glycine 1260 to alanine 1271 the composition is skewed to gly residues. Positions glycine 1272 to glycine 1282 are enriched in acidic residues. The segment covering arginine 1287–serine 1304 has biased composition (low complexity). Residues valine 1321–alanine 1335 show a composition bias toward acidic residues. The span at proline 1373 to alanine 1414 shows a compositional bias: low complexity. 2 stretches are compositionally biased toward pro residues: residues threonine 1720–proline 1731 and serine 1896–glutamate 1912. Positions proline 1913–leucine 1929 are enriched in low complexity. The segment covering valine 1930 to valine 1940 has biased composition (pro residues).

It belongs to the CFAP74 family. In terms of assembly, part of the PDCP1 complex composed of CFAP46, CFAP54, CFAP74 and CFAP221; the PDCP1 complex binds calmodulin.

It localises to the cytoplasm. Its subcellular location is the cytoskeleton. The protein resides in the cilium axoneme. Functionally, as part of the central apparatus of the cilium axoneme may play a role in cilium movement and thereby cell motility. The protein is Cilia- and flagella-associated protein 74 of Chlamydomonas reinhardtii (Chlamydomonas smithii).